Here is a 322-residue protein sequence, read N- to C-terminus: CRISPR-associated endonuclease Cas1 (322 aa).

Residues E149, H214, and E229 each coordinate Mn(2+).

Belongs to the CRISPR-associated endonuclease Cas1 family. Homodimer, forms a heterotetramer with a Cas2 homodimer. It depends on Mg(2+) as a cofactor. Mn(2+) serves as cofactor.

Its function is as follows. CRISPR (clustered regularly interspaced short palindromic repeat), is an adaptive immune system that provides protection against mobile genetic elements (viruses, transposable elements and conjugative plasmids). CRISPR clusters contain spacers, sequences complementary to antecedent mobile elements, and target invading nucleic acids. CRISPR clusters are transcribed and processed into CRISPR RNA (crRNA). Acts as a dsDNA endonuclease. Involved in the integration of spacer DNA into the CRISPR cassette. This is CRISPR-associated endonuclease Cas1 from Methanocaldococcus jannaschii (strain ATCC 43067 / DSM 2661 / JAL-1 / JCM 10045 / NBRC 100440) (Methanococcus jannaschii).